Reading from the N-terminus, the 203-residue chain is Probable chemoreceptor glutamine deamidase CheD (203 aa).

This sequence belongs to the CheD family.

It catalyses the reaction L-glutaminyl-[protein] + H2O = L-glutamyl-[protein] + NH4(+). Probably deamidates glutamine residues to glutamate on methyl-accepting chemotaxis receptors (MCPs), playing an important role in chemotaxis. The polypeptide is Probable chemoreceptor glutamine deamidase CheD (Methylobacillus flagellatus (strain ATCC 51484 / DSM 6875 / VKM B-1610 / KT)).